The chain runs to 467 residues: tRNA dimethylallyltransferase (467 aa).

A mitochondrion-targeting transit peptide spans 1–47 (MAAAAAARAVPVSSGFRGLRRTLPLVVILGATGTGKSTLALQLGQRL). 32-37 (TGTGKS) is a dimethylallyl diphosphate binding site. Interaction with substrate tRNA regions lie at residues 55–58 (DSMQ) and 183–187 (RKVAR). The segment at 221 to 230 (FPNPCILWLH) is core aggregation region. The tract at residues 233–255 (QAVLDERLDKRVDDMLAAGLLEE) is interaction with isopentenylpyrophosphate transferase. 2 interaction with substrate tRNA regions span residues 281–283 (QSI) and 313–331 (ALKQ…WVKN). The Matrin-type zinc-finger motif lies at 395 to 425 (HMCDLCDRIIIGDREWAAHLKSKSHLHQLKK). A disordered region spans residues 432 to 467 (DAVSATGSQSNSPDCDPERIEGESSGQHNQELKASV). A phosphoserine mark is found at serine 443 and serine 455.

Belongs to the IPP transferase family.

It is found in the mitochondrion. The protein resides in the cytoplasm. Its subcellular location is the nucleus. The enzyme catalyses adenosine(37) in tRNA + dimethylallyl diphosphate = N(6)-dimethylallyladenosine(37) in tRNA + diphosphate. Catalyzes the transfer of a dimethylallyl group onto the adenine at position 37 of both cytosolic and mitochondrial tRNAs, leading to the formation of N6-(dimethylallyl)adenosine (i6A37). Mediates modification of a limited subset of tRNAs: tRNA(Ser)(AGA), tRNA(Ser)(CGA), tRNA(Ser)(UGA), as well as partial modification of the selenocysteine tRNA(Ser)(UCA). TRIT1 is therefore required for selenoprotein expression. The chain is tRNA dimethylallyltransferase (Trit1) from Mus musculus (Mouse).